A 228-amino-acid polypeptide reads, in one-letter code: MGKSDRLQQGSKGKGGGKRKHGKCVLMFDDKDRQDFLTGFHKRKLERRRAALEEMKSKLKEEQKRLREERHKEYLKMLQERRQALDEADELEEAITATTECVQYDHPNHTVTVTTISDLDLSADRLLEPAQRDGGDGEERERTEALPKQAGNPLLSKKIQSLTASLNSLVKQKKRRKQKRRQEAKQRSHQSDRKSSSSAFVHNNKQKQGKSTKRQRRRQTGRNERSQD.

The segment at 1-22 (MGKSDRLQQGSKGKGGGKRKHG) is disordered. The stretch at 40–103 (FHKRKLERRR…AITATTECVQ (64 aa)) forms a coiled coil. Over residues 126-145 (LLEPAQRDGGDGEERERTEA) the composition is skewed to basic and acidic residues. Residues 126–228 (LLEPAQRDGG…QTGRNERSQD (103 aa)) form a disordered region. Residues 158-170 (KIQSLTASLNSLV) show a composition bias toward polar residues. Residues 171-180 (KQKKRRKQKR) show a composition bias toward basic residues. The span at 181 to 195 (RQEAKQRSHQSDRKS) shows a compositional bias: basic and acidic residues. Basic residues predominate over residues 204 to 220 (NKQKQGKSTKRQRRRQT).

It belongs to the RRP17 family.

It is found in the nucleus. The protein resides in the nucleolus. Its function is as follows. May bind to rRNA. This chain is Nucleolar protein 12 (nol12), found in Danio rerio (Zebrafish).